We begin with the raw amino-acid sequence, 165 residues long: 2-C-methyl-D-erythritol 2,4-cyclodiphosphate synthase (165 aa).

Residues D13 and H15 each contribute to the a divalent metal cation site. Residues 13–15 and 39–40 contribute to the 4-CDP-2-C-methyl-D-erythritol 2-phosphate site; these read DRH and HS. H47 lines the a divalent metal cation pocket. 4-CDP-2-C-methyl-D-erythritol 2-phosphate is bound by residues 61–63 and F141; that span reads DIG.

It belongs to the IspF family. As to quaternary structure, homotrimer. Requires a divalent metal cation as cofactor.

It carries out the reaction 4-CDP-2-C-methyl-D-erythritol 2-phosphate = 2-C-methyl-D-erythritol 2,4-cyclic diphosphate + CMP. Its pathway is isoprenoid biosynthesis; isopentenyl diphosphate biosynthesis via DXP pathway; isopentenyl diphosphate from 1-deoxy-D-xylulose 5-phosphate: step 4/6. Involved in the biosynthesis of isopentenyl diphosphate (IPP) and dimethylallyl diphosphate (DMAPP), two major building blocks of isoprenoid compounds. Catalyzes the conversion of 4-diphosphocytidyl-2-C-methyl-D-erythritol 2-phosphate (CDP-ME2P) to 2-C-methyl-D-erythritol 2,4-cyclodiphosphate (ME-CPP) with a corresponding release of cytidine 5-monophosphate (CMP). The polypeptide is 2-C-methyl-D-erythritol 2,4-cyclodiphosphate synthase (Thermotoga neapolitana (strain ATCC 49049 / DSM 4359 / NBRC 107923 / NS-E)).